The following is a 564-amino-acid chain: Laccase-22 (564 aa).

An N-terminal signal peptide occupies residues 1 to 25 (MAVLPESRRLSLLLMAACFLLQALS). Plastocyanin-like domains lie at 36–152 (NVVM…PKLG) and 162–314 (KEAV…YANT). Asn41 and Asn82 each carry an N-linked (GlcNAc...) asparagine glycan. The Cu cation site is built by His86 and His88. N-linked (GlcNAc...) asparagine glycosylation is present at Asn118. Cu cation is bound by residues His131 and His133. N-linked (GlcNAc...) asparagine glycans are attached at residues Asn191, Asn302, Asn331, Asn379, Asn389, Asn424, Asn437, and Asn447. The Plastocyanin-like 3 domain occupies 414-548 (DFPATPLHKF…KMAFVVDNGK (135 aa)). Cu cation is bound by residues His465, His468, His470, His527, Cys528, His529, and His533.

It belongs to the multicopper oxidase family. Requires Cu cation as cofactor.

The protein localises to the secreted. It is found in the extracellular space. The protein resides in the apoplast. It carries out the reaction 4 hydroquinone + O2 = 4 benzosemiquinone + 2 H2O. Functionally, lignin degradation and detoxification of lignin-derived products. This Oryza sativa subsp. japonica (Rice) protein is Laccase-22 (LAC22).